The following is a 314-amino-acid chain: Homoserine O-acetyltransferase (314 aa).

Cysteine 142 serves as the catalytic Acyl-thioester intermediate. The substrate site is built by lysine 163 and serine 192. Catalysis depends on histidine 235, which acts as the Proton acceptor. The active site involves glutamate 237. Arginine 249 is a binding site for substrate.

The protein belongs to the MetA family.

The protein resides in the cytoplasm. It carries out the reaction L-homoserine + acetyl-CoA = O-acetyl-L-homoserine + CoA. It participates in amino-acid biosynthesis; L-methionine biosynthesis via de novo pathway; O-acetyl-L-homoserine from L-homoserine: step 1/1. Its function is as follows. Transfers an acetyl group from acetyl-CoA to L-homoserine, forming acetyl-L-homoserine. The sequence is that of Homoserine O-acetyltransferase from Streptococcus pneumoniae (strain Taiwan19F-14).